The sequence spans 252 residues: MGKEIISSKDLHLYYGKKEALKGIDLTFNQGELTAMIGPSGCGKSTYLRCLNRMNDLIPDVTITGSVVYKGKDIYGPKTDNVELRKEIGMVFQQPNPFPFSVYENVIYGLRLKGVKDKQVLDEAVETSLKAAAVWEDVKDKLHKSALSLSGGQQQRVCIARVLAVEPDIILLDEPTSALDPVSSGKIENMLLTLKEKYTMIMVTHNMSQASRISDKTAFFLQGDLIEFNDTKKVFLNPKEKQTEDYISGKFG.

An ABC transporter domain is found at 6-247; it reads ISSKDLHLYY…PKEKQTEDYI (242 aa). 38–45 provides a ligand contact to ATP; that stretch reads GPSGCGKS.

Belongs to the ABC transporter superfamily. Phosphate importer (TC 3.A.1.7) family. As to quaternary structure, the complex is composed of two ATP-binding proteins (PstB), two transmembrane proteins (PstC and PstA) and a solute-binding protein (PstS).

Its subcellular location is the cell membrane. The catalysed reaction is phosphate(out) + ATP + H2O = ADP + 2 phosphate(in) + H(+). Its function is as follows. Part of the ABC transporter complex PstSACB involved in phosphate import. Responsible for energy coupling to the transport system. This Enterococcus faecalis (strain ATCC 700802 / V583) protein is Phosphate import ATP-binding protein PstB 1.